Here is a 390-residue protein sequence, read N- to C-terminus: Dynein regulatory complex subunit 5 (390 aa).

LRR repeat units lie at residues 182 to 205 (TETL…MLAS), 210 to 233 (NLSI…ALAK), and 238 to 261 (HSVI…SLAR).

This sequence belongs to the DRC5 family. As to quaternary structure, component of the nexin-dynein regulatory complex (N-DRC). Interacts with DRC1, DRC2, DRC3, DRC4, DRC7 and DRC11.

The protein localises to the cell projection. It is found in the cilium. It localises to the flagellum. The protein resides in the cytoplasm. Its subcellular location is the cytoskeleton. The protein localises to the flagellum axoneme. Component of the nexin-dynein regulatory complex (N-DRC) a key regulator of ciliary/flagellar motility which maintains the alignment and integrity of the distal axoneme and regulates microtubule sliding in motile axonemes. May play a role in the assembly of N-DRC. This Chlamydomonas reinhardtii (Chlamydomonas smithii) protein is Dynein regulatory complex subunit 5.